The chain runs to 424 residues: Histidine--tRNA ligase (424 aa).

Belongs to the class-II aminoacyl-tRNA synthetase family. In terms of assembly, homodimer.

It localises to the cytoplasm. It carries out the reaction tRNA(His) + L-histidine + ATP = L-histidyl-tRNA(His) + AMP + diphosphate + H(+). This Shigella flexneri protein is Histidine--tRNA ligase.